Here is a 143-residue protein sequence, read N- to C-terminus: Glutamyl-tRNA(Gln) amidotransferase subunit C, chloroplastic/mitochondrial (143 aa).

It belongs to the GatC family. As to quaternary structure, subunit of the heterotrimeric GatCAB amidotransferase (AdT) complex, composed of A, B and C subunits.

It localises to the mitochondrion. The protein resides in the plastid. Its subcellular location is the chloroplast. It carries out the reaction L-glutamyl-tRNA(Gln) + L-glutamine + ATP + H2O = L-glutaminyl-tRNA(Gln) + L-glutamate + ADP + phosphate + H(+). Functionally, allows the formation of correctly charged Gln-tRNA(Gln) through the transamidation of misacylated Glu-tRNA(Gln) in chloroplasts and mitochondria. The reaction takes place in the presence of glutamine and ATP through an activated gamma-phospho-Glu-tRNA(Gln). This is Glutamyl-tRNA(Gln) amidotransferase subunit C, chloroplastic/mitochondrial from Ricinus communis (Castor bean).